The sequence spans 303 residues: NAD kinase (303 aa).

Catalysis depends on D85, which acts as the Proton acceptor. NAD(+)-binding positions include 85 to 86 (DG), R90, 159 to 160 (ND), K187, D189, A224, and Q259.

Belongs to the NAD kinase family. It depends on a divalent metal cation as a cofactor.

It is found in the cytoplasm. It carries out the reaction NAD(+) + ATP = ADP + NADP(+) + H(+). Involved in the regulation of the intracellular balance of NAD and NADP, and is a key enzyme in the biosynthesis of NADP. Catalyzes specifically the phosphorylation on 2'-hydroxyl of the adenosine moiety of NAD to yield NADP. The polypeptide is NAD kinase (Bdellovibrio bacteriovorus (strain ATCC 15356 / DSM 50701 / NCIMB 9529 / HD100)).